Consider the following 276-residue polypeptide: Urease accessory protein UreD (276 aa).

This sequence belongs to the UreD family. UreD, UreF and UreG form a complex that acts as a GTP-hydrolysis-dependent molecular chaperone, activating the urease apoprotein by helping to assemble the nickel containing metallocenter of UreC. The UreE protein probably delivers the nickel.

Its subcellular location is the cytoplasm. Required for maturation of urease via the functional incorporation of the urease nickel metallocenter. The polypeptide is Urease accessory protein UreD (Polaromonas sp. (strain JS666 / ATCC BAA-500)).